The following is a 347-amino-acid chain: Major capsid protein (347 aa).

The protein belongs to the baculoviridae major capsid protein family.

It localises to the virion. Most abundant structural protein of the nucleocapsid produced during the infection cycle. The monomers are arranged in stacked rings around the nucleoprotein core. This Autographa californica nuclear polyhedrosis virus (AcMNPV) protein is Major capsid protein (P39).